Reading from the N-terminus, the 68-residue chain is Antimicrobial peptide UyCT3 (68 aa).

Residues 1-23 form the signal peptide; the sequence is MKNQFVLLLLAIVFLQMIFQSDA. Residue Phe36 is modified to Phenylalanine amide. A propeptide spanning residues 40–68 is cleaved from the precursor; it reads GLENMDKFDELFDGDLSEADLDFLKELMR.

This sequence belongs to the non-disulfide-bridged peptide (NDBP) superfamily. Short antimicrobial peptide (group 4) family. The non-amidated UyCT3 does not show antimicrobial activity. As to expression, expressed by the venom gland.

It is found in the secreted. Its subcellular location is the target cell membrane. Antimicrobial peptide that inhibits the growth of Gram-positive (S.aureus, MIC=10 uM) and Gram-negative bacteria (E.coli, MIC=15 uM and P.aeruginosa, MIC=6 uM). It also shows 35% of hemolysis when 15 uM are tested (95% at 50 uM). This chain is Antimicrobial peptide UyCT3, found in Urodacus yaschenkoi (Inland robust scorpion).